A 102-amino-acid polypeptide reads, in one-letter code: Synaptobrevin-like protein 5 (102 aa).

The v-SNARE coiled-coil homology domain occupies 17 to 77 (KIMRTRRELD…VKIKREMSWK (61 aa)).

The chain is Synaptobrevin-like protein 5 (snb-5) from Caenorhabditis elegans.